Consider the following 353-residue polypeptide: S-adenosylmethionine:tRNA ribosyltransferase-isomerase (353 aa).

This sequence belongs to the QueA family. In terms of assembly, monomer.

It is found in the cytoplasm. It catalyses the reaction 7-aminomethyl-7-carbaguanosine(34) in tRNA + S-adenosyl-L-methionine = epoxyqueuosine(34) in tRNA + adenine + L-methionine + 2 H(+). Its pathway is tRNA modification; tRNA-queuosine biosynthesis. Transfers and isomerizes the ribose moiety from AdoMet to the 7-aminomethyl group of 7-deazaguanine (preQ1-tRNA) to give epoxyqueuosine (oQ-tRNA). In Sodalis glossinidius (strain morsitans), this protein is S-adenosylmethionine:tRNA ribosyltransferase-isomerase.